The primary structure comprises 264 residues: Thymidylate synthase (264 aa).

Arg-21 lines the dUMP pocket. His-51 is a (6R)-5,10-methylene-5,6,7,8-tetrahydrofolate binding site. A dUMP-binding site is contributed by 126–127 (RR). Residue Cys-146 is the Nucleophile of the active site. DUMP contacts are provided by residues 166-169 (RSCD), Asn-177, and 207-209 (HLY). Asp-169 is a (6R)-5,10-methylene-5,6,7,8-tetrahydrofolate binding site. Ala-263 lines the (6R)-5,10-methylene-5,6,7,8-tetrahydrofolate pocket.

This sequence belongs to the thymidylate synthase family. Bacterial-type ThyA subfamily. Homodimer.

Its subcellular location is the cytoplasm. The enzyme catalyses dUMP + (6R)-5,10-methylene-5,6,7,8-tetrahydrofolate = 7,8-dihydrofolate + dTMP. It participates in pyrimidine metabolism; dTTP biosynthesis. Catalyzes the reductive methylation of 2'-deoxyuridine-5'-monophosphate (dUMP) to 2'-deoxythymidine-5'-monophosphate (dTMP) while utilizing 5,10-methylenetetrahydrofolate (mTHF) as the methyl donor and reductant in the reaction, yielding dihydrofolate (DHF) as a by-product. This enzymatic reaction provides an intracellular de novo source of dTMP, an essential precursor for DNA biosynthesis. This Enterobacter sp. (strain 638) protein is Thymidylate synthase.